A 447-amino-acid polypeptide reads, in one-letter code: Omega-3 fatty acid desaturase, chloroplastic (447 aa).

Residues 167–171 (HDCGH) carry the Histidine box-1 motif. Residues 203-207 (HRTHH) carry the Histidine box-2 motif. Residues 370-374 (HVIHH) carry the Histidine box-3 motif.

Belongs to the fatty acid desaturase type 1 family.

The protein localises to the plastid. It localises to the chloroplast membrane. It participates in lipid metabolism; polyunsaturated fatty acid biosynthesis. Functionally, chloroplast omega-3 fatty acid desaturase introduces the third double bond in the biosynthesis of 16:3 and 18:3 fatty acids, important constituents of plant membranes. It is thought to use ferredoxin as an electron donor and to act on fatty acids esterified to galactolipids, sulfolipids and phosphatidylglycerol. This Sesamum indicum (Oriental sesame) protein is Omega-3 fatty acid desaturase, chloroplastic (FAD7).